The following is a 426-amino-acid chain: NADH-quinone oxidoreductase subunit F (426 aa).

65–74 is an NAD(+) binding site; the sequence is GRGGAGFPTG. 176–223 serves as a coordination point for FMN; that stretch reads GAGAYICGEETALIESLEGKRGHPRLKPPYPVQKGLWGKPTVVNNVET. 4 residues coordinate [4Fe-4S] cluster: Cys-347, Cys-350, Cys-353, and Cys-393.

Belongs to the complex I 51 kDa subunit family. The cofactor is FMN. [4Fe-4S] cluster serves as cofactor.

The enzyme catalyses a quinone + NADH + 5 H(+)(in) = a quinol + NAD(+) + 4 H(+)(out). Its function is as follows. NDH-1 shuttles electrons from NADH, via FMN and iron-sulfur (Fe-S) centers, to quinones in the respiratory chain. Couples the redox reaction to proton translocation (for every two electrons transferred, four hydrogen ions are translocated across the cytoplasmic membrane), and thus conserves the redox energy in a proton gradient. The sequence is that of NADH-quinone oxidoreductase subunit F (nuoF) from Aquifex aeolicus (strain VF5).